Consider the following 102-residue polypeptide: Large ribosomal subunit protein bL21 (102 aa).

This sequence belongs to the bacterial ribosomal protein bL21 family. In terms of assembly, part of the 50S ribosomal subunit. Contacts protein L20.

This protein binds to 23S rRNA in the presence of protein L20. This chain is Large ribosomal subunit protein bL21, found in Arthrobacter sp. (strain FB24).